Consider the following 136-residue polypeptide: NADPH-dependent 7-cyano-7-deazaguanine reductase (136 aa).

Cys-50 serves as the catalytic Thioimide intermediate. The Proton donor role is filled by Asp-57. Residues 72 to 74 and 91 to 92 contribute to the substrate site; these read YEL and HE.

Belongs to the GTP cyclohydrolase I family. QueF type 1 subfamily.

It localises to the cytoplasm. The enzyme catalyses 7-aminomethyl-7-carbaguanine + 2 NADP(+) = 7-cyano-7-deazaguanine + 2 NADPH + 3 H(+). It functions in the pathway tRNA modification; tRNA-queuosine biosynthesis. In terms of biological role, catalyzes the NADPH-dependent reduction of 7-cyano-7-deazaguanine (preQ0) to 7-aminomethyl-7-deazaguanine (preQ1). This Prochlorococcus marinus (strain AS9601) protein is NADPH-dependent 7-cyano-7-deazaguanine reductase.